Consider the following 317-residue polypeptide: MALENLLHPTNIKIDEYAKNATKFSFEALERGVGYTLGFALKQTMLYSIAGACVTSIKINDGKVTSLEDVIPCDETVADIILNVKSLSVTLAEDVETGTITFELSGSEEEIFSEEAKLSEGLAITEEVFICSYNGGKKLKIEAKVEKGVGFRPAQDNFKDCEFLLDATFSPVVFCDFEIKDARVGRRTDLDKLELNIKTNGNVNCEEALRLAATKIQNQLRNIVDIEEINKGIFVEDPKDINPILLKHVEELNLTARSSNCLKAVNIRLIGELVQKTENELLKAPNFGKKSLTEIKDKLSELGLSLGTLIENWPQDL.

The alpha N-terminal domain (alpha-NTD) stretch occupies residues 1–227 (MALENLLHPT…NQLRNIVDIE (227 aa)). Positions 241-317 (INPILLKHVE…TLIENWPQDL (77 aa)) are alpha C-terminal domain (alpha-CTD).

This sequence belongs to the RNA polymerase alpha chain family. Homodimer. The RNAP catalytic core consists of 2 alpha, 1 beta, 1 beta' and 1 omega subunit. When a sigma factor is associated with the core the holoenzyme is formed, which can initiate transcription.

It catalyses the reaction RNA(n) + a ribonucleoside 5'-triphosphate = RNA(n+1) + diphosphate. In terms of biological role, DNA-dependent RNA polymerase catalyzes the transcription of DNA into RNA using the four ribonucleoside triphosphates as substrates. This chain is DNA-directed RNA polymerase subunit alpha 2, found in Francisella tularensis subsp. holarctica (strain FTNF002-00 / FTA).